The chain runs to 111 residues: Large ribosomal subunit protein uL22 (111 aa).

It belongs to the universal ribosomal protein uL22 family. Part of the 50S ribosomal subunit.

In terms of biological role, this protein binds specifically to 23S rRNA; its binding is stimulated by other ribosomal proteins, e.g. L4, L17, and L20. It is important during the early stages of 50S assembly. It makes multiple contacts with different domains of the 23S rRNA in the assembled 50S subunit and ribosome. Its function is as follows. The globular domain of the protein is located near the polypeptide exit tunnel on the outside of the subunit, while an extended beta-hairpin is found that lines the wall of the exit tunnel in the center of the 70S ribosome. The chain is Large ribosomal subunit protein uL22 from Clostridium beijerinckii (strain ATCC 51743 / NCIMB 8052) (Clostridium acetobutylicum).